A 574-amino-acid polypeptide reads, in one-letter code: Galactose transporter (574 aa).

A disordered region spans residues 1-57 (MAVEENNMPVVSQQPQAGEDVISSLSKDSHLSAQSQKYSNDELKAGESGSEGSQSVP). Over 1 to 70 (MAVEENNMPV…PKKPMSEYVT (70 aa)) the chain is Cytoplasmic. A compositionally biased stretch (polar residues) spans 23 to 38 (SSLSKDSHLSAQSQKY). Phosphoserine occurs at positions 32, 35, 39, 48, 50, 53, and 55. Residues 71 to 91 (VSLLCLCVAFGGFMFGWDTGT) form a helical membrane-spanning segment. The Extracellular portion of the chain corresponds to 92 to 121 (ISGFVVQTDFLRRFGMKHKDGTHYLSNVRT). The chain crosses the membrane as a helical span at residues 122–142 (GLIVAIFNIGCAFGGIILSKG). Topologically, residues 143–149 (GDMYGRK) are cytoplasmic. The helical transmembrane segment at 150–170 (KGLSIVVSVYIVGIIIQIASI) threads the bilayer. Topologically, residues 171–175 (NKWYQ) are extracellular. Residues 176–196 (YFIGRIISGLGVGGIAVLCPM) traverse the membrane as a helical segment. At 197–207 (LISEIAPKHLR) the chain is on the cytoplasmic side. A helical membrane pass occupies residues 208-228 (GTLVSCYQLMITAGIFLGYCT). Residues 229–242 (NYGTKSYSNSVQWR) lie on the Extracellular side of the membrane. A helical transmembrane segment spans residues 243–263 (VPLGLCFAWSLFMIGALTLVP). Residues 264-342 (ESPRYLCEVN…MGVFVQMFQQ (79 aa)) are Cytoplasmic-facing. The helical transmembrane segment at 343-362 (LTGNNYFFYYGTVIFKSVGL) threads the bilayer. The Extracellular portion of the chain corresponds to 363–366 (DDSF). A helical membrane pass occupies residues 367–387 (ETSIVIGVVNFASTFFSLWTV). Residues 388–394 (ENLGHRK) are Cytoplasmic-facing. The helical transmembrane segment at 395 to 415 (CLLLGAATMMACMVIYASVGV) threads the bilayer. The Extracellular portion of the chain corresponds to 416 to 435 (TRLYPHGKSQPSSKGAGNCM). The helical transmembrane segment at 436-456 (IVFTCFYIFCYATTWAPVAWV) threads the bilayer. Residues 457 to 472 (ITAESFPLRVKSKCMA) are Cytoplasmic-facing. The helical transmembrane segment at 473-493 (LASASNWVWGFLIAFFTPFIT) threads the bilayer. The Extracellular segment spans residues 494–499 (SAINFY). The chain crosses the membrane as a helical span at residues 500-520 (YGYVFMGCLVAMFFYVFFFVP). Over 521-574 (ETKGLSLEEIQELWEEGVLPWKSEGWIPSSRRGNNYDLEDLQHDDKPWYKAMLE) the chain is Cytoplasmic.

It belongs to the major facilitator superfamily. Sugar transporter (TC 2.A.1.1) family.

It is found in the membrane. Its function is as follows. GAL2 is a facilitated diffusion transporter required for both the high-affinity galactokinase-dependent and low-affinity galactokinase-independent galactose transport processes. The chain is Galactose transporter (GAL2) from Saccharomyces cerevisiae (strain ATCC 204508 / S288c) (Baker's yeast).